The primary structure comprises 565 residues: NAD-dependent malic enzyme (565 aa).

Y104 acts as the Proton donor in catalysis. R157 contacts NAD(+). The active-site Proton acceptor is the K175. Positions 246, 247, and 270 each coordinate a divalent metal cation. Residues D270 and N418 each contribute to the NAD(+) site.

Belongs to the malic enzymes family. Homotetramer. Mg(2+) is required as a cofactor. It depends on Mn(2+) as a cofactor.

The catalysed reaction is (S)-malate + NAD(+) = pyruvate + CO2 + NADH. The enzyme catalyses oxaloacetate + H(+) = pyruvate + CO2. This is NAD-dependent malic enzyme from Shigella sonnei (strain Ss046).